The chain runs to 228 residues: 2-C-methyl-D-erythritol 4-phosphate cytidylyltransferase (228 aa).

Belongs to the IspD/TarI cytidylyltransferase family. IspD subfamily.

The enzyme catalyses 2-C-methyl-D-erythritol 4-phosphate + CTP + H(+) = 4-CDP-2-C-methyl-D-erythritol + diphosphate. It participates in isoprenoid biosynthesis; isopentenyl diphosphate biosynthesis via DXP pathway; isopentenyl diphosphate from 1-deoxy-D-xylulose 5-phosphate: step 2/6. In terms of biological role, catalyzes the formation of 4-diphosphocytidyl-2-C-methyl-D-erythritol from CTP and 2-C-methyl-D-erythritol 4-phosphate (MEP). The sequence is that of 2-C-methyl-D-erythritol 4-phosphate cytidylyltransferase from Nostoc sp. (strain PCC 7120 / SAG 25.82 / UTEX 2576).